Here is a 123-residue protein sequence, read N- to C-terminus: Small ribosomal subunit protein uS12 (123 aa).

A 3-methylthioaspartic acid modification is found at Asp89.

Belongs to the universal ribosomal protein uS12 family. Part of the 30S ribosomal subunit. Contacts proteins S8 and S17. May interact with IF1 in the 30S initiation complex.

Its function is as follows. With S4 and S5 plays an important role in translational accuracy. Functionally, interacts with and stabilizes bases of the 16S rRNA that are involved in tRNA selection in the A site and with the mRNA backbone. Located at the interface of the 30S and 50S subunits, it traverses the body of the 30S subunit contacting proteins on the other side and probably holding the rRNA structure together. The combined cluster of proteins S8, S12 and S17 appears to hold together the shoulder and platform of the 30S subunit. This chain is Small ribosomal subunit protein uS12, found in Brucella anthropi (strain ATCC 49188 / DSM 6882 / CCUG 24695 / JCM 21032 / LMG 3331 / NBRC 15819 / NCTC 12168 / Alc 37) (Ochrobactrum anthropi).